The sequence spans 102 residues: Protein translation factor SUI1 homolog (102 aa).

The protein belongs to the SUI1 family.

The sequence is that of Protein translation factor SUI1 homolog from Methanococcus maripaludis (strain C5 / ATCC BAA-1333).